Consider the following 558-residue polypeptide: Transcription factor RelB (558 aa).

A compositionally biased stretch (basic and acidic residues) spans 1–11; that stretch reads MPSRRAARESA. A disordered region spans residues 1-21; the sequence is MPSRRAARESAPELGALGSSD. S19 carries the phosphoserine modification. A leucine-zipper region spans residues 22–50; it reads LSSLSLTVSRTTDELEIIDEYIKENGFGL. T84 is subject to Phosphothreonine. In terms of domain architecture, RHD spans 103-418; sequence PYLVITEQPK…ESKRRKKKPV (316 aa). Short sequence motifs (nuclear localization signal) lie at residues 387–391 and 411–416; these read KKRKR and KRRKKK. S552 is modified (phosphoserine).

As to quaternary structure, component of the NF-kappa-B RelB-p50 complex. Component of the NF-kappa-B RelB-p52 complex. Self-associates; the interaction seems to be transient and may prevent degradation allowing for heterodimer formation p50 or p52. Interacts with NFKB1/p50, NFKB2/p52 and NFKB2/p100. Interacts with NFKBID. Interacts with BMAL1 and the interaction is enhanced in the presence of CLOCK. Post-translationally, phosphorylation at 'Thr-103' and 'Ser-573' is followed by proteasomal degradation. In terms of tissue distribution, expressed in intestine, thymus and spleen. Undetectable in liver, bome marrow, kidney and testis.

It is found in the nucleus. The protein resides in the cytoplasm. It localises to the cytoskeleton. Its subcellular location is the microtubule organizing center. The protein localises to the centrosome. Functionally, NF-kappa-B is a pleiotropic transcription factor which is present in almost all cell types and is involved in many biological processed such as inflammation, immunity, differentiation, cell growth, tumorigenesis and apoptosis. NF-kappa-B is a homo- or heterodimeric complex formed by the Rel-like domain-containing proteins RELA/p65, RELB, NFKB1/p105, NFKB1/p50, REL and NFKB2/p52. The dimers bind at kappa-B sites in the DNA of their target genes and the individual dimers have distinct preferences for different kappa-B sites that they can bind with distinguishable affinity and specificity. Different dimer combinations act as transcriptional activators or repressors, respectively. NF-kappa-B is controlled by various mechanisms of post-translational modification and subcellular compartmentalization as well as by interactions with other cofactors or corepressors. NF-kappa-B complexes are held in the cytoplasm in an inactive state complexed with members of the NF-kappa-B inhibitor (I-kappa-B) family. In a conventional activation pathway, I-kappa-B is phosphorylated by I-kappa-B kinases (IKKs) in response to different activators, subsequently degraded thus liberating the active NF-kappa-B complex which translocates to the nucleus. NF-kappa-B heterodimeric RelB-p50 and RelB-p52 complexes are transcriptional activators. RELB neither associates with DNA nor with RELA/p65 or REL. Stimulates promoter activity in the presence of NFKB2/p49. As a member of the NUPR1/RELB/IER3 survival pathway, may allow the development of pancreatic intraepithelial neoplasias. Regulates the circadian clock by repressing the transcriptional activator activity of the CLOCK-BMAL1 heterodimer in a CRY1/CRY2 independent manner. Increased repression of the heterodimer is seen in the presence of NFKB2/p52. Is required for both T and B lymphocyte maturation and function. The polypeptide is Transcription factor RelB (Relb) (Mus musculus (Mouse)).